Here is a 164-residue protein sequence, read N- to C-terminus: Phosphopantetheine adenylyltransferase (164 aa).

T9 is a binding site for substrate. Residues 9–10 and H17 contribute to the ATP site; that span reads TF. Residues K41, L78, and R92 each contribute to the substrate site. Residues 93-95, E103, and 128-134 each bind ATP; these read GLR and RQAIASK.

It belongs to the bacterial CoaD family. In terms of assembly, homohexamer. It depends on Mg(2+) as a cofactor.

The protein resides in the cytoplasm. The catalysed reaction is (R)-4'-phosphopantetheine + ATP + H(+) = 3'-dephospho-CoA + diphosphate. Its pathway is cofactor biosynthesis; coenzyme A biosynthesis; CoA from (R)-pantothenate: step 4/5. Functionally, reversibly transfers an adenylyl group from ATP to 4'-phosphopantetheine, yielding dephospho-CoA (dPCoA) and pyrophosphate. This chain is Phosphopantetheine adenylyltransferase, found in Paracoccus denitrificans (strain Pd 1222).